Here is a 102-residue protein sequence, read N- to C-terminus: Large ribosomal subunit protein bL21 (102 aa).

It belongs to the bacterial ribosomal protein bL21 family. In terms of assembly, part of the 50S ribosomal subunit. Contacts protein L20.

Functionally, this protein binds to 23S rRNA in the presence of protein L20. The sequence is that of Large ribosomal subunit protein bL21 from Clavibacter sepedonicus (Clavibacter michiganensis subsp. sepedonicus).